A 617-amino-acid polypeptide reads, in one-letter code: MKRNLLFIILLLLLPGLHQVFATSTIKKVAPTFWWAGMKNPELQILLYGDRISSADVSLSADNITLQEVVKQENPNYLVLYLDLSKAAPQNFDIILKQGKKQTKIPYELKQRRPNASAVEGFDSSDVLYLIMPDRFANGNPSNDIIPGMLEGNVDRNEPFARHGGDLKGIENHLDYIADLGVTSIWLNPIQENDMKEGSYHGYAITDYYQVDRRFGSNEEFRKLTQEANAKGLKVVMDMIFNHCGSDNYLFKDMPSKDWFNFEGNYVQTSFKTATQMDPYASDYEKKIAIDGWFTLTMPDFNQRNRHVATYLIQSSIWWIEYAGINGIRQDTHPYADFDMMARWCKAVNEEYPKFNIVGETWLGNNVLISYWQKDSRLAYPKNSNLPTVMDFPLMEEMNKAFDEETTEWNGGLFRLYEYLSQDIVYSHPMSLLTFLDNHDTSRFYRSEADTKNLDRYKQALTFLLTTRGIPQIYYGTEILMAADKANGDGLLRCDFPGGWPNDTKNCFDAANRTPQQNEAFSFMQKLLQWRKGNEVIAKGQLKHFAPNKGVYVYERKYGDKSVVVFLNGNDREQTIDLVPYQEILPASSAFDLLTEKKVELRNELTLPSREIYLLSF.

A signal peptide spans 1–22 (MKRNLLFIILLLLLPGLHQVFA). Positions 138, 143, 144, 164, and 166 each coordinate Ca(2+). Catalysis depends on residues Asp331 and Glu360.

The protein belongs to the glycosyl hydrolase 13 family. Ca(2+) is required as a cofactor.

Its subcellular location is the periplasm. It catalyses the reaction Hydrolysis of pullulan to panose (6-alpha-D-glucosylmaltose).. It participates in glycan degradation; starch degradation. Functionally, neopullulanase that cleaves 1,4-alpha-glucosidic linkages in starch to produce disaccharides or trisaccharides in starch degradation. This chain is Neopullulanase SusA (susA), found in Bacteroides thetaiotaomicron (strain ATCC 29148 / DSM 2079 / JCM 5827 / CCUG 10774 / NCTC 10582 / VPI-5482 / E50).